The following is a 388-amino-acid chain: Ovalbumin-related protein Y (388 aa).

Cys74 and Cys121 form a disulfide bridge. Residues Asn95, Asn215, Asn293, and Asn312 are each glycosylated (N-linked (GlcNAc...) asparagine).

It belongs to the serpin family. Ov-serpin subfamily. N-glycosylated on at least two Asn residues by ovomucoid type carbohydrate units. Post-translationally, the N-terminus is blocked. In terms of tissue distribution, major protein of egg white. Expressed in the magnum of the oviduct (at protein level).

It is found in the secreted. The sequence is that of Ovalbumin-related protein Y (SERPINB14B) from Gallus gallus (Chicken).